Reading from the N-terminus, the 83-residue chain is Cytochrome b559 subunit alpha (83 aa).

Residues 21-35 form a helical membrane-spanning segment; the sequence is VIHSITIPSLFIAGW. Histidine 23 contacts heme.

It belongs to the PsbE/PsbF family. As to quaternary structure, heterodimer of an alpha subunit and a beta subunit. PSII is composed of 1 copy each of membrane proteins PsbA, PsbB, PsbC, PsbD, PsbE, PsbF, PsbH, PsbI, PsbJ, PsbK, PsbL, PsbM, PsbT, PsbX, PsbY, PsbZ, Psb30/Ycf12, at least 3 peripheral proteins of the oxygen-evolving complex and a large number of cofactors. It forms dimeric complexes. Heme b serves as cofactor.

Its subcellular location is the plastid. The protein resides in the chloroplast thylakoid membrane. Functionally, this b-type cytochrome is tightly associated with the reaction center of photosystem II (PSII). PSII is a light-driven water:plastoquinone oxidoreductase that uses light energy to abstract electrons from H(2)O, generating O(2) and a proton gradient subsequently used for ATP formation. It consists of a core antenna complex that captures photons, and an electron transfer chain that converts photonic excitation into a charge separation. This Tupiella akineta (Green alga) protein is Cytochrome b559 subunit alpha.